Here is a 1205-residue protein sequence, read N- to C-terminus: Solute carrier family 12 member 2 (1205 aa).

An N-acetylmethionine modification is found at M1. A compositionally biased stretch (low complexity) spans 1-22; it reads MEPGPARPRLAPAARPGWGRAA. Residues 1 to 102 are disordered; the sequence is MEPGPARPRL…AAAAAAAAAA (102 aa). Topologically, residues 1 to 279 are cytoplasmic; sequence MEPGPARPRL…AESKGVVKFG (279 aa). A compositionally biased stretch (basic residues) spans 23-35; it reads GCRRRGGPARHGR. 2 positions are modified to phosphoserine: S74 and S76. The RFXV motif 1 motif lies at 77–80; the sequence is RFQV. Positions 87 to 102 are enriched in low complexity; sequence AGRAAAAAAAAAAAAA. The RFXV motif 2 signature appears at 133-136; that stretch reads RFRV. A compositionally biased stretch (low complexity) spans 143–155; it reads ASSSADDSLSDAA. The segment at 143–187 is disordered; the sequence is ASSSADDSLSDAAGVGGDGPNVSFQNGGDTVLSEGSSLHSGGGSG. Residues T196, T200, T205, T210, and T223 each carry the phosphothreonine modification. A Phosphoserine modification is found at S235. Position 259 is a phosphothreonine (T259). Residues 280–309 form a discontinuously helical membrane-spanning segment; it reads WIKGVLVRCMLNIWGVMLFIRLSWIVGQAG. L290 is a Na(+) binding site. K(+) contacts are provided by N291 and I292. Na(+) is bound at residue W293. Chloride-binding residues include G294, V295, and M296. Residues 310–329 traverse the membrane as a helical segment; that stretch reads IGLSVVVIAMATVVTTITGL. The Cytoplasmic portion of the chain corresponds to 330–360; that stretch reads STSAIATNGFVRGGGAYYLISRSLGPEFGGA. The helical transmembrane segment at 361 to 388 threads the bilayer; it reads IGLIFAFANAVAVAMYVVGFAETVVELL. A chloride-binding site is contributed by F365. K(+) is bound at residue Y376. The Extracellular segment spans residues 389-398; it reads KEHSILMIDE. Residues 399–422 form a helical membrane-spanning segment; the sequence is INDIRIIGAITVVILLGISVAGME. Residues 423–425 lie on the Cytoplasmic side of the membrane; the sequence is WEA. Residues 426-447 traverse the membrane as a helical segment; it reads KAQIVLLVILLLAIADFVIGTF. The Extracellular segment spans residues 448-479; sequence ISLESKKPKGFFGYKSEIFNENFGPDFREEET. Residues 480-497 traverse the membrane as a discontinuously helical segment; that stretch reads FFSVFAIFFPAATGILAG. P489, A490, and T492 together coordinate K(+). 2 residues coordinate chloride: P489 and A490. Chloride contacts are provided by G493 and I494. Residues 498–512 lie on the Cytoplasmic side of the membrane; that stretch reads ANISGDLADPQSAIP. Residues 513-534 form a helical membrane-spanning segment; the sequence is KGTLLAILITTVVYIGIAVSVG. Over 535-591 the chain is Extracellular; sequence SCVVRDATGNVNDTITTELTNCTSAACKLNFDFSYCESNTCSYGLMNNFQVMSMVSG. 2 N-linked (GlcNAc...) asparagine glycosylation sites follow: N546 and N555. Intrachain disulfides connect C556–C561 and C570–C575. A helical membrane pass occupies residues 592 to 616; sequence FAPLISAGIFSATLSSALASLVSAP. The Na(+) site is built by A603, S606, and S607. Over 617–644 the chain is Cytoplasmic; it reads KIFQALCKDNIYPAFQMFAKGYGKNNEP. Transmembrane regions (helical) follow at residues 645-665 and 666-684; these read LRGYILTFLIALGFILIAELN and VIAPIISNFFLASYALINF. Positions 675 and 679 each coordinate chloride. The Cytoplasmic segment spans residues 685-707; sequence SVFHASLAKSPGWRPAFKYYNMW. The next 2 helical transmembrane spans lie at 708–725 and 726–738; these read ISLIGAILCCIVMFVINW and WAALLTYVIVLGL. Residues 739 to 1205 lie on the Cytoplasmic side of the membrane; sequence YIYVTYKKPD…NHQSVLTFYS (467 aa). A scissor helix region spans residues 754–771; that stretch reads STQALTYLSALQHSIRLS. Phosphoserine is present on residues S933 and S937. The interval 953 to 986 is disordered; sequence SDQDTCKSSGEKSITQKDEEEDGKTPTQPLLKKE. Residue S987 is modified to Phosphoserine.

It belongs to the SLC12A transporter family. As to quaternary structure, homodimer; adopts a domain-swap conformation at the scissor helices connecting the transmembrane domain and C-terminal domain. Post-translationally, phosphorylated at Thr-196, Thr-200 and Thr-205 by OXSR1/OSR1 and STK39/SPAK downstream of WNK kinases (WNK1, WNK2, WNK3 or WNK4), promoting its activity. Widely expressed. High expression found in the cochlea, cochlear lateral wall, and the choroid plexus. Lower expression found in the cerebellum and the cortex.

It is found in the basolateral cell membrane. It carries out the reaction K(+)(out) + 2 chloride(out) + Na(+)(out) = K(+)(in) + 2 chloride(in) + Na(+)(in). Activated following phosphorylation by OXSR1/OSR1 and STK39/SPAK downstream of WNK kinases (WNK1, WNK2, WNK3 or WNK4). Inhibited by bumetanide and furosemide. Cation-chloride cotransporter which mediates the electroneutral transport of chloride, potassium and/or sodium ions across the membrane. Plays a vital role in the regulation of ionic balance and cell volume. The polypeptide is Solute carrier family 12 member 2 (Slc12a2) (Mus musculus (Mouse)).